A 360-amino-acid chain; its full sequence is Photosystem II protein D1 3 (360 aa).

The next 3 membrane-spanning stretches (helical) occupy residues 29–46 (YVGWFGVLMIPTLLTATI), 118–133 (HFLLGISCYMGRQWEL), and 142–156 (WICVAYSAPLSAAFA). His118 contacts chlorophyll a. Tyr126 is a pheophytin a binding site. Residues Asp170 and Glu189 each coordinate [CaMn4O5] cluster. Residues 197–218 (FHMLGVAGVFGGSLFSAMHGSL) form a helical membrane-spanning segment. Residue His198 participates in chlorophyll a binding. A quinone contacts are provided by residues His215 and 264–265 (SF). Fe cation is bound at residue His215. His272 serves as a coordination point for Fe cation. The helical transmembrane segment at 274–288 (FLGAWPVVGIWFTSM) threads the bilayer. [CaMn4O5] cluster is bound by residues His332, Glu333, Asp342, and Ala344. Positions 345-360 (AGEATPVALTAPSIHG) are excised as a propeptide.

It belongs to the reaction center PufL/M/PsbA/D family. In terms of assembly, PSII is composed of 1 copy each of membrane proteins PsbA, PsbB, PsbC, PsbD, PsbE, PsbF, PsbH, PsbI, PsbJ, PsbK, PsbL, PsbM, PsbT, PsbX, PsbY, PsbZ, Psb30/Ycf12, peripheral proteins PsbO, CyanoQ (PsbQ), PsbU, PsbV and a large number of cofactors. It forms dimeric complexes. The D1/D2 heterodimer binds P680, chlorophylls that are the primary electron donor of PSII, and subsequent electron acceptors. It shares a non-heme iron and each subunit binds pheophytin, quinone, additional chlorophylls, carotenoids and lipids. D1 provides most of the ligands for the Mn4-Ca-O5 cluster of the oxygen-evolving complex (OEC). There is also a Cl(-1) ion associated with D1 and D2, which is required for oxygen evolution. The PSII complex binds additional chlorophylls, carotenoids and specific lipids. is required as a cofactor. Tyr-161 forms a radical intermediate that is referred to as redox-active TyrZ, YZ or Y-Z. In terms of processing, C-terminally processed by CtpA; processing is essential to allow assembly of the oxygen-evolving complex and thus photosynthetic growth.

It localises to the cellular thylakoid membrane. It carries out the reaction 2 a plastoquinone + 4 hnu + 2 H2O = 2 a plastoquinol + O2. Its function is as follows. Photosystem II (PSII) is a light-driven water:plastoquinone oxidoreductase that uses light energy to abstract electrons from H(2)O, generating O(2) and a proton gradient subsequently used for ATP formation. It consists of a core antenna complex that captures photons, and an electron transfer chain that converts photonic excitation into a charge separation. The D1/D2 (PsbA/PsbD) reaction center heterodimer binds P680, the primary electron donor of PSII as well as several subsequent electron acceptors. This is Photosystem II protein D1 3 from Synechococcus sp. (strain ATCC 27144 / PCC 6301 / SAUG 1402/1) (Anacystis nidulans).